A 357-amino-acid polypeptide reads, in one-letter code: Serpentine receptor class epsilon-30 (357 aa).

7 consecutive transmembrane segments (helical) span residues 31-51 (IFEL…IFVM), 61-81 (LMFL…GKFI), 121-141 (LLIF…FGIL), 165-185 (IPII…LAII), 192-212 (FLAR…FLFI), 253-273 (LVVV…ALTF), and 283-303 (LIEN…MFSI).

This sequence belongs to the nematode receptor-like protein sre family.

It localises to the membrane. This is Serpentine receptor class epsilon-30 (sre-30) from Caenorhabditis elegans.